The following is a 566-amino-acid chain: ALBINO3-like protein 3, mitochondrial (566 aa).

A mitochondrion-targeting transit peptide spans 1–44 (MAFRRVLLSHLRRSHHTCSSLSPHHVSATTQPSIALALFQSRFF). Helical transmembrane passes span 139–159 (WVVI…ILIL), 207–227 (LWVP…ITSI), 249–269 (LTEI…AGLH), and 301–321 (LLTC…LLYW). TPR repeat units follow at residues 386-419 (PKEL…DPEY), 420-453 (LQAM…LLDT), 465-498 (IVAS…KEPD), and 507-540 (LDAL…DPSF). Positions 547 to 566 (CEEDDTIPTSSSSNSTSKTS) are disordered. Residues 555 to 566 (TSSSSNSTSKTS) are compositionally biased toward low complexity.

Belongs to the OXA1/ALB3/YidC (TC 2.A.9.2) family.

The protein resides in the mitochondrion inner membrane. In terms of biological role, probably required for the insertion of integral membrane proteins into the mitochondrial inner membrane. In Arabidopsis thaliana (Mouse-ear cress), this protein is ALBINO3-like protein 3, mitochondrial (ALB3L3).